We begin with the raw amino-acid sequence, 854 residues long: Envelope glycoprotein gp160 (854 aa).

Residues 1–20 (MGRLLIKILIIAIGISIGIG) form the signal peptide. The Extracellular segment spans residues 21 to 705 (NLYVTVFYGI…IILGLRFAWV (685 aa)). Residue Asn35 is glycosylated (N-linked (GlcNAc...) asparagine; by host). A disulfide bridge links Cys42 with Cys55. Residues Asn68, Asn115, Asn136, Asn153, Asn168, Asn182, and Asn199 are each glycosylated (N-linked (GlcNAc...) asparagine; by host). 5 disulfide bridges follow: Cys99–Cys207, Cys106–Cys198, Cys111–Cys154, Cys220–Cys250, and Cys230–Cys242. The V1 stretch occupies residues 111–153 (CVELNGTATTKATTTATTTMTTPCQNCSTEQIEGEMAEEPASN). A V2 region spans residues 154–198 (CTFAIAGYQRDVKKNYSMTWYDQELVCNNKTGSEKGSKDCYMIHC). N-linked (GlcNAc...) asparagine; by host glycosylation is found at Asn244, Asn255, Asn265, Asn271, Asn283, Asn295, Asn305, Asn355, Asn400, Asn409, Asn458, Asn472, and Asn478. The interval 300-332 (CRRPGNKTVLPVTIMAGLVFHSQKYNTRLKQAW) is V3. The cysteines at positions 300 and 333 are disulfide-linked. Disulfide bonds link Cys382–Cys457 and Cys389–Cys430. The interval 389–430 (CKMDWFINYLNNRTEDAEGTNRTCDKGKPGPGPCVQRTYVAC) is V4. The interval 473 to 481 (KSGPINVTL) is V5. A fusion peptide region spans residues 523-543 (VPFVLGFLGFLGAAGTAMGAA). Positions 586–602 (LNARVTALEKYLEDQAR) are immunosuppression. Asn630 and Asn646 each carry an N-linked (GlcNAc...) asparagine; by host glycan. The stretch at 633–672 (WLEWERQINALEGNITQLLEEAQNQESKNLDLYQKLDDWS) forms a coiled coil. The segment at 667 to 688 (KLDDWSGFWSWFSLSTWLGYVK) is MPER; binding to GalCer. Residues 706–726 (LWGCIRNIRQGYNPLPQIHIH) traverse the membrane as a helical segment. The YXXL motif; contains endocytosis signal signature appears at 717-720 (YNPL). Residues 727-854 (SSAERPDNGG…VRQGLEKVLG (128 aa)) are Cytoplasmic-facing.

The mature envelope protein (Env) consists of a homotrimer of non-covalently associated gp120-gp41 heterodimers. The resulting complex protrudes from the virus surface as a spike. Interacts with host CD4 and CCR5. Gp120 also interacts with the C-type lectins CD209/DC-SIGN and CLEC4M/DC-SIGNR (collectively referred to as DC-SIGN(R)). As to quaternary structure, the mature envelope protein (Env) consists of a homotrimer of non-covalently associated gp120-gp41 heterodimers. The resulting complex protrudes from the virus surface as a spike. In terms of processing, specific enzymatic cleavages in vivo yield mature proteins. Envelope glycoproteins are synthesized as an inactive precursor that is heavily N-glycosylated and processed likely by host cell furin in the Golgi to yield the mature SU and TM proteins. The cleavage site between SU and TM requires the minimal sequence [KR]-X-[KR]-R.

Its subcellular location is the virion membrane. The protein resides in the host cell membrane. It is found in the host endosome membrane. Its function is as follows. The surface protein gp120 (SU) attaches the virus to the host lymphoid cell by binding to the primary receptor CD4. This interaction induces a structural rearrangement creating a high affinity binding site for a chemokine coreceptor like CCR5. This peculiar 2 stage receptor-interaction strategy allows gp120 to maintain the highly conserved coreceptor-binding site in a cryptic conformation, protected from neutralizing antibodies. These changes are transmitted to the transmembrane protein gp41 and are thought to activate its fusogenic potential by unmasking its fusion peptide. In terms of biological role, surface protein gp120 (SU) may target the virus to gut-associated lymphoid tissue (GALT) by binding host ITGA4/ITGB7 (alpha-4/beta-7 integrins), a complex that mediates T-cell migration to the GALT. Interaction between gp120 and ITGA4/ITGB7 would allow the virus to enter GALT early in the infection, infecting and killing most of GALT's resting CD4+ T-cells. This T-cell depletion is believed to be the major insult to the host immune system leading to AIDS. Functionally, the surface protein gp120 is a ligand for CD209/DC-SIGN and CLEC4M/DC-SIGNR, which are respectively found on dendritic cells (DCs), and on endothelial cells of liver sinusoids and lymph node sinuses. These interactions allow capture of viral particles at mucosal surfaces by these cells and subsequent transmission to permissive cells. DCs are professional antigen presenting cells, critical for host immunity by inducing specific immune responses against a broad variety of pathogens. They act as sentinels in various tissues where they take up antigen, process it, and present it to T-cells following migration to lymphoid organs. SIV subverts the migration properties of dendritic cells to gain access to CD4+ T-cells in lymph nodes. Virus transmission to permissive T-cells occurs either in trans (without DCs infection, through viral capture and transmission), or in cis (following DCs productive infection, through the usual CD4-gp120 interaction), thereby inducing a robust infection. In trans infection, bound virions remain infectious over days and it is proposed that they are not degraded, but protected in non-lysosomal acidic organelles within the DCs close to the cell membrane thus contributing to the viral infectious potential during DCs' migration from the periphery to the lymphoid tissues. On arrival at lymphoid tissues, intact virions recycle back to DCs' cell surface allowing virus transmission to CD4+ T-cells. Virion capture also seems to lead to MHC-II-restricted viral antigen presentation, and probably to the activation of SIV-specific CD4+ cells. The transmembrane protein gp41 (TM) acts as a class I viral fusion protein. Under the current model, the protein has at least 3 conformational states: pre-fusion native state, pre-hairpin intermediate state, and post-fusion hairpin state. During fusion of viral and target intracellular membranes, the coiled coil regions (heptad repeats) assume a trimer-of-hairpins structure, positioning the fusion peptide in close proximity to the C-terminal region of the ectodomain. The formation of this structure appears to drive apposition and subsequent fusion of viral and target cell membranes. Complete fusion occurs in host cell endosomes. The virus undergoes clathrin-dependent internalization long before endosomal fusion, thus minimizing the surface exposure of conserved viral epitopes during fusion and reducing the efficacy of inhibitors targeting these epitopes. Membranes fusion leads to delivery of the nucleocapsid into the cytoplasm. Its function is as follows. The envelope glycoprotein gp160 precursor down-modulates cell surface CD4 antigen by interacting with it in the endoplasmic reticulum and blocking its transport to the cell surface. In terms of biological role, the gp120-gp41 heterodimer allows rapid transcytosis of the virus through CD4 negative cells such as simple epithelial monolayers of the intestinal, rectal and endocervical epithelial barriers. Both gp120 and gp41 specifically recognize glycosphingolipids galactosyl-ceramide (GalCer) or 3' sulfo-galactosyl-ceramide (GalS) present in the lipid rafts structures of epithelial cells. Binding to these alternative receptors allows the rapid transcytosis of the virus through the epithelial cells. This transcytotic vesicle-mediated transport of virions from the apical side to the basolateral side of the epithelial cells does not involve infection of the cells themselves. The polypeptide is Envelope glycoprotein gp160 (env) (Cercopithecidae (Old World monkeys)).